A 381-amino-acid chain; its full sequence is tRNA pseudouridine synthase D (381 aa).

D81 serves as the catalytic Nucleophile. In terms of domain architecture, TRUD spans 160–335 (GMPNYFGPQR…TLGSRRFFWV (176 aa)).

The protein belongs to the pseudouridine synthase TruD family.

The catalysed reaction is uridine(13) in tRNA = pseudouridine(13) in tRNA. Functionally, responsible for synthesis of pseudouridine from uracil-13 in transfer RNAs. The sequence is that of tRNA pseudouridine synthase D from Helicobacter pylori (strain Shi470).